The chain runs to 160 residues: Large ribosomal subunit protein eL14 (160 aa).

Positions 136–160 (SDGTPRILKKDRRERLRAEKAKAKK) are disordered. Positions 146–160 (DRRERLRAEKAKAKK) are enriched in basic and acidic residues.

Belongs to the eukaryotic ribosomal protein eL14 family.

The protein is Large ribosomal subunit protein eL14 (RpL14) of Drosophila virilis (Fruit fly).